The primary structure comprises 576 residues: Glucose-6-phosphate 1-dehydrogenase 1, chloroplastic (576 aa).

The N-terminal 50 residues, 1 to 50, are a transit peptide targeting the chloroplast; the sequence is MATHSMIIPSPSSSSSSLATAASPFKETLPLFSRSLTFPRKSLFSQVRLR. Residues 97–104 and Arg131 contribute to the NADP(+) site; that span reads GASGDLAK. Residues Cys149 and Cys157 are joined by a disulfide bond. Lys234 provides a ligand contact to NADP(+). Residues Lys234, 264–268, Glu302, and Asp321 each bind D-glucose 6-phosphate; that span reads HYLGK. His326 serves as the catalytic Proton acceptor. Residue Lys419 participates in NADP(+) binding. Residues Lys422 and Arg427 each contribute to the D-glucose 6-phosphate site. 2 residues coordinate NADP(+): Arg432 and Arg461. Gln463 serves as a coordination point for D-glucose 6-phosphate. Residues 469-471 and Arg554 contribute to the NADP(+) site; that span reads YLR.

It belongs to the glucose-6-phosphate dehydrogenase family. In terms of assembly, forms homodimer. Interacts with G6PD2, G6PD3 and G6PD4. Expressed in leaves, stems, buds, flowers and siliques.

It localises to the plastid. The protein resides in the chloroplast stroma. Its subcellular location is the peroxisome. The enzyme catalyses D-glucose 6-phosphate + NADP(+) = 6-phospho-D-glucono-1,5-lactone + NADPH + H(+). The protein operates within carbohydrate degradation; pentose phosphate pathway; D-ribulose 5-phosphate from D-glucose 6-phosphate (oxidative stage): step 1/3. Regulated by metabolites. Post-translationally inactivated by cysteine-mediated redox modification via the ferredoxin-thioredoxin system in the light and this avoids futile cycles with photosynthetic CO2 fixation. Functionally, catalyzes the rate-limiting step of the oxidative pentose-phosphate pathway, which represents a route for the dissimilation of carbohydrates besides glycolysis. The main function of this enzyme is to provide reducing power (NADPH) and pentose phosphates for fatty acid and nucleic acid synthesis which are involved in membrane synthesis and cell division. The polypeptide is Glucose-6-phosphate 1-dehydrogenase 1, chloroplastic (Arabidopsis thaliana (Mouse-ear cress)).